A 114-amino-acid polypeptide reads, in one-letter code: Nucleoid-associated protein Tlet_0999 (114 aa).

This sequence belongs to the YbaB/EbfC family. As to quaternary structure, homodimer.

Its subcellular location is the cytoplasm. The protein resides in the nucleoid. Its function is as follows. Binds to DNA and alters its conformation. May be involved in regulation of gene expression, nucleoid organization and DNA protection. The protein is Nucleoid-associated protein Tlet_0999 of Pseudothermotoga lettingae (strain ATCC BAA-301 / DSM 14385 / NBRC 107922 / TMO) (Thermotoga lettingae).